Reading from the N-terminus, the 382-residue chain is Chaperone protein DnaJ (382 aa).

The J domain maps to D5–G70. A CR-type zinc finger spans residues G134–K212. Zn(2+) is bound by residues C147, C150, C164, C167, C186, C189, C200, and C203. 4 CXXCXGXG motif repeats span residues C147–G154, C164–G171, C186–G193, and C200–G207.

The protein belongs to the DnaJ family. In terms of assembly, homodimer. It depends on Zn(2+) as a cofactor.

It is found in the cytoplasm. Functionally, participates actively in the response to hyperosmotic and heat shock by preventing the aggregation of stress-denatured proteins and by disaggregating proteins, also in an autonomous, DnaK-independent fashion. Unfolded proteins bind initially to DnaJ; upon interaction with the DnaJ-bound protein, DnaK hydrolyzes its bound ATP, resulting in the formation of a stable complex. GrpE releases ADP from DnaK; ATP binding to DnaK triggers the release of the substrate protein, thus completing the reaction cycle. Several rounds of ATP-dependent interactions between DnaJ, DnaK and GrpE are required for fully efficient folding. Also involved, together with DnaK and GrpE, in the DNA replication of plasmids through activation of initiation proteins. The sequence is that of Chaperone protein DnaJ from Haemophilus influenzae (strain PittGG).